The following is a 142-amino-acid chain: Large ribosomal subunit protein uL13 (142 aa).

This sequence belongs to the universal ribosomal protein uL13 family. Part of the 50S ribosomal subunit.

In terms of biological role, this protein is one of the early assembly proteins of the 50S ribosomal subunit, although it is not seen to bind rRNA by itself. It is important during the early stages of 50S assembly. The protein is Large ribosomal subunit protein uL13 of Nitrosococcus oceani (strain ATCC 19707 / BCRC 17464 / JCM 30415 / NCIMB 11848 / C-107).